A 421-amino-acid chain; its full sequence is Bone morphogenetic protein 10 (421 aa).

The N-terminal stretch at 1-21 (MGSLVLPLSAVFCLVAHSASG) is a signal peptide. Residues 22-313 (SPIMGLEQSP…IDDSSARIRR (292 aa)) constitute a propeptide that is removed on maturation. 2 N-linked (GlcNAc...) asparagine glycosylation sites follow: N67 and N131. 3 disulfide bridges follow: C320–C386, C349–C418, and C353–C420.

The protein belongs to the TGF-beta family. As to quaternary structure, homodimer; disulfide-linked. Interacts with FBN1 (via N-terminal domain) and FBN2. Interacts with ENG. In terms of tissue distribution, in the embryo, expressed exclusively in the ventricular trabecular myocardium of the developing heart from 9.0 dpc-13.5 dpc. By 16.5 dpc-18.5 dpc, only detectable in atria. Highly expressed in the adult heart where it is found in the right atrium but not in the left atrium. Lower levels in adult liver and lung.

The protein resides in the secreted. Functionally, required for maintaining the proliferative activity of embryonic cardiomyocytes by preventing premature activation of the negative cell cycle regulator CDKN1C/p57KIP and maintaining the required expression levels of cardiogenic factors such as MEF2C and NKX2-5. Acts as a ligand for ACVRL1/ALK1, BMPR1A/ALK3 and BMPR1B/ALK6, leading to activation of SMAD1, SMAD5 and SMAD8 transcription factors. Inhibits endothelial cell migration and growth. May reduce cell migration and cell matrix adhesion in breast cancer cell lines. In Mus musculus (Mouse), this protein is Bone morphogenetic protein 10 (Bmp10).